A 164-amino-acid chain; its full sequence is Putative 4-hydroxy-4-methyl-2-oxoglutarate aldolase (164 aa).

Residues 75 to 78 and arginine 97 each bind substrate; that span reads GDML. Residue aspartate 98 coordinates a divalent metal cation.

Belongs to the class II aldolase/RraA-like family. Homotrimer. It depends on a divalent metal cation as a cofactor.

The enzyme catalyses 4-hydroxy-4-methyl-2-oxoglutarate = 2 pyruvate. It catalyses the reaction oxaloacetate + H(+) = pyruvate + CO2. Functionally, catalyzes the aldol cleavage of 4-hydroxy-4-methyl-2-oxoglutarate (HMG) into 2 molecules of pyruvate. Also contains a secondary oxaloacetate (OAA) decarboxylase activity due to the common pyruvate enolate transition state formed following C-C bond cleavage in the retro-aldol and decarboxylation reactions. The chain is Putative 4-hydroxy-4-methyl-2-oxoglutarate aldolase from Hahella chejuensis (strain KCTC 2396).